Reading from the N-terminus, the 135-residue chain is Interleukin-4 (135 aa).

An N-terminal signal peptide occupies residues 1–24; sequence MGLTYQLIPVLVCLLVCTSHLVHG. 3 disulfide bridges follow: Cys27/Cys135, Cys48/Cys85, and Cys70/Cys105. N-linked (GlcNAc...) asparagine glycosylation is present at Asn62.

This sequence belongs to the IL-4/IL-13 family.

The protein resides in the secreted. Participates in at least several B-cell activation processes as well as of other cell types. It is a costimulator of DNA-synthesis. It induces the expression of class II MHC molecules on resting B-cells. It enhances both secretion and cell surface expression of IgE and IgG1. It also regulates the expression of the low affinity Fc receptor for IgE (CD23) on both lymphocytes and monocytes. Positively regulates IL31RA expression in macrophages. Stimulates autophagy in dendritic cells by interfering with mTORC1 signaling and through the induction of RUFY4. The polypeptide is Interleukin-4 (IL4) (Bubalus bubalis (Domestic water buffalo)).